Here is a 620-residue protein sequence, read N- to C-terminus: MENENKPNVANFEAAVAVKDYEKACSELLLILSQLDSNFGGIQEIEFEYPVQLQDLEQEKIVYFCTRMATAITTLFSDPVLEISDLGVQRFLVYQRWLALIFASSPFVNADHILQTYNREPNRKNSLEIHLDSSKSSLIKFCILYLPESNVNLNLDVMWNISPELCASLCFALQSPRFIGTSTAFNKRATILQWFPRHLDQLKNLNNIPSAISHDVYMHCSYDTSVNKHDVKRALNHVIRRHIESEYGWKDRYVAHIGYRNNKPVMVVLLEHFHSAHSIYRTHSTSMIAAREHFYLIGLGSPSVDQAGQEVFDEFHLVAGDNMKQKLEFIRSVCESNGAAIFYMPSIGMDMTTIFASNTRLAPIQAIALGHPATTHSDFIEYVIVEDDYVGSEACFSETLLRLPKDALPYVPSALAPEKVDYLLRENPEVVNIGIASTTMKLNPYFLEALKAIRDRAKVKVHFHFALGQSNGITHPYVERFIKSYLGDSATAHPHSPYHQYLRILHNCDMMVNPFPFGNTNGIIDMVTLGLVGVCKTGAEVHEHIDEGLFKRLGLPEWLIANTVDEYVERAVRLAENHQERLELRRYIIENNGLNTLFTGDPRPMGQVFLEKLNAFLKEN.

The protein belongs to the glycosyltransferase 41 family. It depends on Does not require a metal cofactor. as a cofactor.

It is found in the cytoplasm. It carries out the reaction L-asparaginyl-[protein] + UDP-alpha-D-glucose = N(4)-(beta-D-glucosyl)-L-asparaginyl-[protein] + UDP + H(+). It functions in the pathway protein modification; protein glycosylation. Its function is as follows. Inverting glycosyltransferase that catalyzes the transfer of one glucose moiety from UDP-glucose to an asparagine residue in peptides and proteins containing the NX(S/T) motif, resulting in their modification with a beta-linked 1,N-glucose. Likely acts as a key component of a general protein glycosylation system. Also accepts UDP-galactose as a substrate donor, albeit with low efficiency. Cannot use UDP-GlcNAc or UDP-GalNAc as substrate donor. The polypeptide is UDP-glucose:protein N-beta-glucosyltransferase (Actinobacillus pleuropneumoniae serotype 7 (strain AP76)).